A 389-amino-acid chain; its full sequence is Terminal nucleotidyltransferase 5D (389 aa).

Belongs to the TENT family. In terms of tissue distribution, restricted to testis.

It catalyses the reaction RNA(n) + ATP = RNA(n)-3'-adenine ribonucleotide + diphosphate. Catalyzes the transfer of one adenosine molecule from an ATP to an mRNA poly(A) tail bearing a 3'-OH terminal group. This chain is Terminal nucleotidyltransferase 5D, found in Homo sapiens (Human).